The primary structure comprises 356 residues: MHHQWLLLAACFWVIFMFMVASKFITLTFKDPDGYSAKQEFVFLTAMPEAEKLRGEKHFSEVMKPTGKMLSESHPDQPPVYLERLELIRNACKEEALRNLSHTEVSKFVLDRIFVCDKHKILFCQTPKVGNTQWKKVLIVLNGAFSSIEEIPENVVHDHEKNGLPRLSSFSKIGIQKRLKTYFKFFIVRDPFERLISAFKDKFVHNPRFEPWYRHEIAPGIIRKYRKNRTETRGIQFEDFVRYLGDPNRRWLDLQFGDHIIHWVTYVKLCAPCEIKYSVIGHHETLEADAPYILKEAGIDHLVSYPTIPPGITMYNRTKVEQYFLGISKRDIRRLYARFEGDFKLFGYQKPDFLLN.

Over 1–6 (MHHQWL) the chain is Cytoplasmic. Residues 7–27 (LLAACFWVIFMFMVASKFITL) form a helical; Signal-anchor for type II membrane protein membrane-spanning segment. At 28–356 (TFKDPDGYSA…GYQKPDFLLN (329 aa)) the chain is on the lumenal side. An N-linked (GlcNAc...) asparagine glycan is attached at Asn99. Residues 127–133 (PKVGNTQ) and 189–197 (RDPFERLIS) contribute to the 3'-phosphoadenylyl sulfate site. Asn228 and Asn316 each carry an N-linked (GlcNAc...) asparagine glycan.

This sequence belongs to the sulfotransferase 2 family. In myogenic progenitors, it is ubiquitously expressed.

It localises to the golgi apparatus membrane. It catalyses the reaction 3-O-{beta-D-GlcA-(1-&gt;[3)-alpha-D-Xyl-(1-&gt;3)-beta-D-GlcA-(1-&gt;](n)-4)-beta-D-Xyl-(1-&gt;4)-Rib-ol-P-Rib-ol-P-3-beta-D-GalNAc-(1-&gt;3)-beta-D-GlcNAc-(1-&gt;4)-O-6-P-alpha-D-Man}-L-Thr-[protein] + 3'-phosphoadenylyl sulfate = 3-O-{O-3-S-beta-D-GlcA-(1-&gt;[3)-alpha-D-Xyl-(1-&gt;3)-beta-D-GlcA-(1-&gt;](n)-4)-beta-D-Xyl-(1-&gt;4)-Rib-ol-P-Rib-ol-P-3-beta-D-GalNAc-(1-&gt;3)-beta-D-GlcNAc-(1-&gt;4)-O-6-P-alpha-D-Man}-L-Thr-[protein] + adenosine 3',5'-bisphosphate + H(+). It carries out the reaction 17beta-estradiol 3-O-(beta-D-glucuronate) + 3'-phosphoadenylyl sulfate = 17beta-estradiol 3-O-(3-sulfo-beta-D-glucuronate) + adenosine 3',5'-bisphosphate + H(+). The enzyme catalyses 17beta-estradiol 3-O-(beta-D-glucuronate) 17-sulfate + 3'-phosphoadenylyl sulfate = 17beta-estradiol 3-O-(3-sulfo-beta-D-glucuronate) 17-sulfate + adenosine 3',5'-bisphosphate + H(+). The catalysed reaction is 17beta-estradiol 17-O-(beta-D-glucuronate) + 3'-phosphoadenylyl sulfate = 17beta-estradiol 17-O-(3-sulfo-beta-D-glucuronate) + adenosine 3',5'-bisphosphate + H(+). It catalyses the reaction 16alpha,17beta-estriol 3-O-(beta-D-glucuronate) + 3'-phosphoadenylyl sulfate = 16alpha,17beta-estriol 3-O-(3-sulfo-beta-D-glucuronate) + adenosine 3',5'-bisphosphate + H(+). It carries out the reaction 16alpha,17beta-estriol 16-O-(beta-D-glucuronate) + 3'-phosphoadenylyl sulfate = 16alpha,17beta-estriol 16-O-(3-sulfo-beta-D-glucuronate) + adenosine 3',5'-bisphosphate + H(+). The enzyme catalyses 16alpha,17beta-estriol 17-O-(beta-D-glucuronate) + 3'-phosphoadenylyl sulfate = 16alpha,17beta-estriol 17-O-(3-sulfo-beta-D-glucuronate) + adenosine 3',5'-bisphosphate + H(+). The catalysed reaction is estrone 3-O-(beta-D-glucuronate) + 3'-phosphoadenylyl sulfate = estrone 3-O-(3-sulfo-beta-D-glucuronate) + adenosine 3',5'-bisphosphate + H(+). It catalyses the reaction 3alpha,20alpha-dihydroxy-5beta-pregnane 3-O-(beta-D-glucuronate) + 3'-phosphoadenylyl sulfate = 3alpha,20alpha-dihydroxy-5beta-pregnane 3-O-(3-sulfo-beta-D-glucuronate) + adenosine 3',5'-bisphosphate + H(+). It carries out the reaction testosterone 17-O-(beta-D-glucuronate) + 3'-phosphoadenylyl sulfate = testosterone 17-O-(3-sulfo-beta-D-glucuronate) + adenosine 3',5'-bisphosphate + H(+). The enzyme catalyses 3beta-androst-5-en-17-one 3-O-(beta-D-glucuronate) + 3'-phosphoadenylyl sulfate = 3beta-androst-5-en-17-one 3-O-(3-sulfo-beta-D-glucuronate) + adenosine 3',5'-bisphosphate + H(+). The catalysed reaction is 3alpha,17alpha-dihydroxy-5beta-androstane-11-one-17beta-carboxylate 3-O-(beta-D-glucuronate) + 3'-phosphoadenylyl sulfate = 3alpha,17alpha-dihydroxy-5beta-androstane-11-one-17beta-carboxylate 3-O-(3-sulfo-beta-D-glucuronate) + adenosine 3',5'-bisphosphate + H(+). It catalyses the reaction 3alpha-hydroxyetiocholan-17-one 3-O-(beta-D-glucuronate) + 3'-phosphoadenylyl sulfate = 3alpha-hydroxyetiocholan-17-one 3-O-(3-sulfo-beta-D-glucuronate) + adenosine 3',5'-bisphosphate + H(+). Its pathway is steroid metabolism. It functions in the pathway protein modification; carbohydrate sulfation. In terms of biological role, catalyzes the transfer of sulfate from 3'-phosphoadenylyl sulfate (PAPS) to position 3 of terminal glucuronic acid of both protein- and lipid-linked oligosaccharides. Participates in biosynthesis of HNK-1 carbohydrate structure 3-O-sulfo-beta-D-GlcA-(1-&gt;3)-beta-D-Gal-(1-&gt;4)-D-GlcNAc-R, a sulfated glucuronyl-lactosaminyl residue carried by many neural recognition molecules, which is involved in cell interactions during ontogenetic development and in synaptic plasticity in the adult. May be indirectly involved in synapse plasticity of the hippocampus, via its role in HNK-1 biosynthesis. Sulfates terminal glucuronyl residue of the laminin globular (LG)-domain binding epitope on DAG1/alpha-dystroglycan and prevents further polymerization by LARGE1 glycosyltransferase. Likely defines the chain length of LG epitope, conferring binding specificity to extracellular matrix components. Plays a role in down-regulating the steroid hormones. Sulfates glucuronidated estrogens and androgens with an impact in hormone cycle and fertility. Has a preference for glucuronyl moiety at the 3-hydroxyl group of a sterol ring rather than the 17-hydroxyl group, showing high catalytic efficiency for 17beta-estradiol 3-O-(beta-D-glucuronate) and dehydroepiandrosterone 3-O-(beta-D-glucuronate) hormones. This Rattus norvegicus (Rat) protein is Carbohydrate sulfotransferase 10 (Chst10).